We begin with the raw amino-acid sequence, 265 residues long: Novel plant SNARE 11 (265 aa).

The Cytoplasmic segment spans residues 1–215 (MDPISAVSEE…IGRQVATDKC (215 aa)). Positions 30–75 (QKLEKIKDANRQSRQLEELTDKMRDCKSLIKDFDREIKSLESGNDA) form a coiled coil. One can recognise a t-SNARE coiled-coil homology domain in the interval 144-206 (NSMMDDTDQA…KKASKLVKEI (63 aa)). The helical; Anchor for type IV membrane protein transmembrane segment at 216–236 (IMAFLFLIVIGVIAIIIVKIV) threads the bilayer. Residues 237–265 (NPNNKDIRDIPGVGLAPPAMNRRLLWNHY) lie on the Vesicular side of the membrane.

The protein belongs to the novel plant SNARE family. As to quaternary structure, interacts with KNOLLE to form a t-SNARE complex. Does not interact with SYP21, VTI12 or VPS45. Expressed in roots, stems, flower, siliques, expanding leaves, but not in mature leaves. Not limited to dividing cells.

Its subcellular location is the membrane. In terms of biological role, t-SNARE involved in diverse vesicle trafficking and membrane fusion processes, including cell plate formation. The protein is Novel plant SNARE 11 (NPSN11) of Arabidopsis thaliana (Mouse-ear cress).